A 455-amino-acid polypeptide reads, in one-letter code: Tryptophan dimethylallyltransferase (455 aa).

L-tryptophan contacts are provided by residues 79-80 (VL) and Glu-88. Arg-99, Lys-186, and Tyr-188 together coordinate substrate. Positions 190 and 256 each coordinate L-tryptophan. The substrate site is built by Arg-269, Lys-271, Tyr-273, Gln-355, Tyr-357, Tyr-421, and Tyr-425.

The protein belongs to the tryptophan dimethylallyltransferase family. In terms of assembly, homodimer.

The catalysed reaction is L-tryptophan + dimethylallyl diphosphate = 4-(3-methylbut-2-enyl)-L-tryptophan + diphosphate. It functions in the pathway alkaloid biosynthesis; ergot alkaloid biosynthesis. Tryptophan dimethylallyltransferase; part of the gene cluster that mediates the biosynthesis of fungal ergot alkaloid. DmaW catalyzes the first step of ergot alkaloid biosynthesis by condensing dimethylallyl diphosphate (DMAP) and tryptophan to form 4-dimethylallyl-L-tryptophan. The second step is catalyzed by the methyltransferase easF that methylates 4-dimethylallyl-L-tryptophan in the presence of S-adenosyl-L-methionine, resulting in the formation of 4-dimethylallyl-L-abrine. The catalase easC and the FAD-dependent oxidoreductase easE then transform 4-dimethylallyl-L-abrine to chanoclavine-I which is further oxidized by easD in the presence of NAD(+), resulting in the formation of chanoclavine-I aldehyde. Agroclavine dehydrogenase easG then mediates the conversion of chanoclavine-I aldehyde to agroclavine via a non-enzymatic adduct reaction: the substrate is an iminium intermediate that is formed spontaneously from chanoclavine-I aldehyde in the presence of glutathione. Further conversion of agroclavine to paspalic acid is a two-step process involving oxidation of agroclavine to elymoclavine and of elymoclavine to paspalic acid, the second step being performed by the elymoclavine oxidase cloA. However, cloA does not encode a functional enzyme indicating that C.fusiformis terminates its ergot alkaloid pathway at elymoclavine. The chain is Tryptophan dimethylallyltransferase from Claviceps fusiformis (Ergot fungus).